The following is a 453-amino-acid chain: Chromosomal replication initiator protein DnaA (453 aa).

Positions 1–71 (MSEKEIWEKV…QAILFDVVGY (71 aa)) are domain I, interacts with DnaA modulators. A domain II region spans residues 71-114 (YEVKPHFITTEELANYSNNETATPKETTKPSTETTEDNHVLGRE). Positions 115–331 (QFNAHNTFDT…GALTRLLAYS (217 aa)) are domain III, AAA+ region. Residues Gly-159, Gly-161, Lys-162, and Thr-163 each contribute to the ATP site. A domain IV, binds dsDNA region spans residues 332-453 (QLLGKPITTE…ENLEKEIRNV (122 aa)).

It belongs to the DnaA family. In terms of assembly, oligomerizes as a right-handed, spiral filament on DNA at oriC.

The protein localises to the cytoplasm. Functionally, plays an essential role in the initiation and regulation of chromosomal replication. ATP-DnaA binds to the origin of replication (oriC) to initiate formation of the DNA replication initiation complex once per cell cycle. Binds the DnaA box (a 9 base pair repeat at the origin) and separates the double-stranded (ds)DNA. Forms a right-handed helical filament on oriC DNA; dsDNA binds to the exterior of the filament while single-stranded (ss)DNA is stabiized in the filament's interior. The ATP-DnaA-oriC complex binds and stabilizes one strand of the AT-rich DNA unwinding element (DUE), permitting loading of DNA polymerase. After initiation quickly degrades to an ADP-DnaA complex that is not apt for DNA replication. Binds acidic phospholipids. The sequence is that of Chromosomal replication initiator protein DnaA from Staphylococcus aureus (strain bovine RF122 / ET3-1).